Consider the following 98-residue polypeptide: Large ribosomal subunit protein uL23 (98 aa).

The protein belongs to the universal ribosomal protein uL23 family. As to quaternary structure, part of the 50S ribosomal subunit. Contacts protein L29, and trigger factor when it is bound to the ribosome.

Functionally, one of the early assembly proteins it binds 23S rRNA. One of the proteins that surrounds the polypeptide exit tunnel on the outside of the ribosome. Forms the main docking site for trigger factor binding to the ribosome. The sequence is that of Large ribosomal subunit protein uL23 from Borrelia garinii subsp. bavariensis (strain ATCC BAA-2496 / DSM 23469 / PBi) (Borreliella bavariensis).